Here is a 780-residue protein sequence, read N- to C-terminus: Acyl-CoA dehydrogenase family member 11 (780 aa).

Residue K177 is modified to N6-acetyllysine. Y324 carries the post-translational modification Phosphotyrosine. Residue K391 is modified to N6-succinyllysine. FAD-binding positions include 504-514 (FCMTEPDVASS) and 538-540 (WSS). A substrate-binding site is contributed by S514. Substrate is bound at residue 629-632 (GPGR). FAD contacts are provided by residues R657, Q727, and 727-731 (QVCGG). G755 lines the substrate pocket. FAD is bound at residue 756–758 (PDE).

It belongs to the acyl-CoA dehydrogenase family. Homodimer. FAD serves as cofactor. Widely expressed with highest levels in brain followed by liver, heart and kidney.

It is found in the peroxisome. The protein localises to the mitochondrion membrane. It catalyses the reaction a 2,3-saturated acyl-CoA + oxidized [electron-transfer flavoprotein] + H(+) = a (2E)-enoyl-CoA + reduced [electron-transfer flavoprotein]. The enzyme catalyses docosanoyl-CoA + oxidized [electron-transfer flavoprotein] + H(+) = (2E)-docosenoyl-CoA + reduced [electron-transfer flavoprotein]. The catalysed reaction is tetracosanoyl-CoA + oxidized [electron-transfer flavoprotein] + H(+) = (2E)-tetracosenoyl-CoA + reduced [electron-transfer flavoprotein]. It carries out the reaction eicosanoyl-CoA + oxidized [electron-transfer flavoprotein] + H(+) = (2E)-eicosenoyl-CoA + reduced [electron-transfer flavoprotein]. It catalyses the reaction hexacosanoyl-CoA + oxidized [electron-transfer flavoprotein] + H(+) = (2E)-hexacosenoyl-CoA + reduced [electron-transfer flavoprotein]. The enzyme catalyses tricosanoyl-CoA + oxidized [electron-transfer flavoprotein] + H(+) = (2E)-tricosenoyl-CoA + reduced [electron-transfer flavoprotein]. It functions in the pathway lipid metabolism; fatty acid beta-oxidation. Its function is as follows. Acyl-CoA dehydrogenase, that exhibits maximal activity towards saturated C22-CoA. Probably participates in beta-oxydation and energy production but could also play a role in the metabolism of specific fatty acids to control fatty acids composition of cellular lipids in brain. The sequence is that of Acyl-CoA dehydrogenase family member 11 (ACAD11) from Homo sapiens (Human).